An 874-amino-acid polypeptide reads, in one-letter code: Coatomer subunit gamma-1 (874 aa).

The segment covering 1-11 has biased composition (basic and acidic residues); that stretch reads MLKKFDKKDEE. The tract at residues 1–21 is disordered; that stretch reads MLKKFDKKDEESGGGSNPLQH. HEAT repeat units follow at residues 64-101, 283-320, 322-355, and 356-392; these read TEAT…IAED, KELA…KHPS, VTAC…GSES, and SIDR…KYPR. Position 594 is a phosphothreonine (threonine 594). The segment at 609–874 is interaction with ZNF289/ARFGAP2; it reads RQEIFQEQLA…PVDIILASVG (266 aa).

Belongs to the COPG family. Oligomeric complex that consists of at least the alpha, beta, beta', gamma, delta, epsilon and zeta subunits. Interacts with ZNF289/ARFGAP2 through its C-terminal appendage domain. Interacts with EGFR upon EGF treatment; interaction is essential for regulation of EGF-dependent nuclear transport of EGFR by retrograde trafficking from the Golgi to the ER. The coatomer interacts with KDEL receptors; the interaction is important for retrograde trafficking of KDEL-bearing proteins from the Golgi to the endoplasmic reticulum. Interacts with COPB1. Interacts with TMED10 (via C-terminus). Interacts with TMED2, TMED3, TMED7 and TMED9.

The protein resides in the cytoplasm. Its subcellular location is the cytosol. It localises to the golgi apparatus membrane. It is found in the cytoplasmic vesicle. The protein localises to the COPI-coated vesicle membrane. Its function is as follows. The coatomer is a cytosolic protein complex that binds to dilysine motifs and reversibly associates with Golgi non-clathrin-coated vesicles, which further mediate biosynthetic protein transport from the ER, via the Golgi up to the trans Golgi network. Coatomer complex is required for budding from Golgi membranes, and is essential for the retrograde Golgi-to-ER transport of dilysine-tagged proteins. In mammals, the coatomer can only be recruited by membranes associated to ADP-ribosylation factors (ARFs), which are small GTP-binding proteins; the complex also influences the Golgi structural integrity, as well as the processing, activity, and endocytic recycling of LDL receptors. Required for limiting lipid storage in lipid droplets. Involved in lipid homeostasis by regulating the presence of perilipin family members PLIN2 and PLIN3 at the lipid droplet surface and promoting the association of adipocyte triglyceride lipase (PNPLA2) with the lipid droplet surface to mediate lipolysis. This is Coatomer subunit gamma-1 (Copg1) from Rattus norvegicus (Rat).